The chain runs to 185 residues: ATP synthase subunit b (185 aa).

The helical transmembrane segment at 27-47 threads the bilayer; the sequence is GALIWKGLNILAFLGIVYYFG.

The protein belongs to the ATPase B chain family. In terms of assembly, F-type ATPases have 2 components, F(1) - the catalytic core - and F(0) - the membrane proton channel. F(1) has five subunits: alpha(3), beta(3), gamma(1), delta(1), epsilon(1). F(0) has three main subunits: a(1), b(2) and c(10-14). The alpha and beta chains form an alternating ring which encloses part of the gamma chain. F(1) is attached to F(0) by a central stalk formed by the gamma and epsilon chains, while a peripheral stalk is formed by the delta and b chains.

Its subcellular location is the cell inner membrane. Functionally, f(1)F(0) ATP synthase produces ATP from ADP in the presence of a proton or sodium gradient. F-type ATPases consist of two structural domains, F(1) containing the extramembraneous catalytic core and F(0) containing the membrane proton channel, linked together by a central stalk and a peripheral stalk. During catalysis, ATP synthesis in the catalytic domain of F(1) is coupled via a rotary mechanism of the central stalk subunits to proton translocation. In terms of biological role, component of the F(0) channel, it forms part of the peripheral stalk, linking F(1) to F(0). The protein is ATP synthase subunit b of Aquifex aeolicus (strain VF5).